The chain runs to 413 residues: Serine/threonine transporter SstT (413 aa).

9 consecutive transmembrane segments (helical) span residues 21–41, 61–81, 89–109, 146–166, 189–209, 224–244, 305–325, 337–357, and 363–383; these read IGLL…SALG, SVAP…KKVG, IIYL…FASF, ITAL…GLGI, IVHF…ASTL, LAVL…IIVF, MGGA…TLGI, LVAS…LLLI, and LFGI…IIGV.

This sequence belongs to the dicarboxylate/amino acid:cation symporter (DAACS) (TC 2.A.23) family.

The protein localises to the cell inner membrane. The catalysed reaction is L-serine(in) + Na(+)(in) = L-serine(out) + Na(+)(out). It carries out the reaction L-threonine(in) + Na(+)(in) = L-threonine(out) + Na(+)(out). Its function is as follows. Involved in the import of serine and threonine into the cell, with the concomitant import of sodium (symport system). The sequence is that of Serine/threonine transporter SstT from Mannheimia succiniciproducens (strain KCTC 0769BP / MBEL55E).